The following is a 22-amino-acid chain: Mu-conotoxin SxIIIA (22 aa).

3 cysteine pairs are disulfide-bonded: Cys2–Cys15, Cys3–Cys20, and Cys10–Cys21. Position 22 is an alanine amide (Ala22).

Belongs to the conotoxin M superfamily. As to expression, expressed by the venom duct.

The protein localises to the secreted. Functionally, mu-conotoxins block voltage-gated sodium channels (Nav). This synthetic toxin potently blocks rNav1.4/SCN4A (IC(50)= 7 nM). It also moderately blocks rNav1.1/SCN1A (IC(50)=370 nM), rNav1.2/SCN2A (IC(50)=1 uM), and mNav1.6/SCN6A (IC(50)=570 nM). It is noteworthy that coexpression of subunits beta-2 or beta-4 (but not beta-1 or beta-3) decrease by more that 10-fold the binding potency of the toxin to rNav1.6. It is also noteworthy that the toxin is 50-fold more potent on mouse Nav1.6 than on rat Nav1.6. In vivo, when injected intraperitoneally or subcutaneously in mice, causes motor impairment, paralysis and death. In Conus striolatus (Cone snail), this protein is Mu-conotoxin SxIIIA.